Consider the following 333-residue polypeptide: MNSSNLENLNYKSSIRDEVVPSRKKLTLPPWLEVAKPRLIPLLLATTLGGMALTEEWPLSSPKLICTLGGGALAAAAAGALNCLWEMELDKRMTRTSKRALPAGKLSSETVFLAAVSCTLAASMLLVSGVNYLAAGLTLLGLFSYVILYTVILKPRTTKNIVFGGVAGAIPPLVGASAATGHVGLSGWWLFGLVMLWTPAHFWALAILLKDDYASVGIPMLPSVKGSVFTAKAISRYGWATVLMSIMGVFALPEGGLLYGIMLLPFNGRLLQLINELKKSPDDLSRAKSLFRWSILYMFGICLLLLISRTQLSVEFEQQSMQIFLSIVSLLSN.

The next 7 helical transmembrane spans lie at 64–84 (LICTLGGGALAAAAAGALNCL), 110–130 (TVFLAAVSCTLAASMLLVSGV), 133–153 (LAAGLTLLGLFSYVILYTVIL), 161–181 (IVFGGVAGAIPPLVGASAATG), 189–209 (WLFGLVMLWTPAHFWALAILL), 246–266 (IMGVFALPEGGLLYGIMLLPF), and 287–307 (AKSLFRWSILYMFGICLLLLI).

Belongs to the UbiA prenyltransferase family. Protoheme IX farnesyltransferase subfamily.

Its subcellular location is the cell inner membrane. It carries out the reaction heme b + (2E,6E)-farnesyl diphosphate + H2O = Fe(II)-heme o + diphosphate. It functions in the pathway porphyrin-containing compound metabolism; heme O biosynthesis; heme O from protoheme: step 1/1. In terms of biological role, converts heme B (protoheme IX) to heme O by substitution of the vinyl group on carbon 2 of heme B porphyrin ring with a hydroxyethyl farnesyl side group. This Prochlorococcus marinus (strain AS9601) protein is Protoheme IX farnesyltransferase.